The primary structure comprises 358 residues: Photosystem II protein D1 2 (358 aa).

The next 3 helical transmembrane spans lie at 28-45 (YVGW…AATI), 117-132 (HFLI…QWEL), and 141-155 (WICV…AAMA). Residue histidine 117 participates in chlorophyll a binding. A pheophytin a-binding site is contributed by tyrosine 125. [CaMn4O5] cluster contacts are provided by aspartate 169 and glutamate 188. Residues 196–217 (FHMLGVAGVFGGSLFSAMHGSL) traverse the membrane as a helical segment. Chlorophyll a is bound at residue histidine 197. A quinone is bound by residues histidine 214 and 263 to 264 (SF). Fe cation is bound at residue histidine 214. A Fe cation-binding site is contributed by histidine 271. Residues 273–287 (FLGAWPVVGIWFTSM) form a helical membrane-spanning segment. Positions 331, 332, 341, and 343 each coordinate [CaMn4O5] cluster. The propeptide occupies 344–358 (TVESTPVALQAPAIG).

This sequence belongs to the reaction center PufL/M/PsbA/D family. In terms of assembly, PSII is composed of 1 copy each of membrane proteins PsbA, PsbB, PsbC, PsbD, PsbE, PsbF, PsbH, PsbI, PsbJ, PsbK, PsbL, PsbM, PsbT, PsbX, PsbY, PsbZ, Psb30/Ycf12, peripheral proteins PsbO, CyanoQ (PsbQ), PsbU, PsbV and a large number of cofactors. It forms dimeric complexes. The D1/D2 heterodimer binds P680, chlorophylls that are the primary electron donor of PSII, and subsequent electron acceptors. It shares a non-heme iron and each subunit binds pheophytin, quinone, additional chlorophylls, carotenoids and lipids. D1 provides most of the ligands for the Mn4-Ca-O5 cluster of the oxygen-evolving complex (OEC). There is also a Cl(-1) ion associated with D1 and D2, which is required for oxygen evolution. The PSII complex binds additional chlorophylls, carotenoids and specific lipids. is required as a cofactor. Post-translationally, tyr-160 forms a radical intermediate that is referred to as redox-active TyrZ, YZ or Y-Z. In terms of processing, C-terminally processed by CtpA; processing is essential to allow assembly of the oxygen-evolving complex and thus photosynthetic growth.

It localises to the cellular thylakoid membrane. The enzyme catalyses 2 a plastoquinone + 4 hnu + 2 H2O = 2 a plastoquinol + O2. Photosystem II (PSII) is a light-driven water:plastoquinone oxidoreductase that uses light energy to abstract electrons from H(2)O, generating O(2) and a proton gradient subsequently used for ATP formation. It consists of a core antenna complex that captures photons, and an electron transfer chain that converts photonic excitation into a charge separation. The D1/D2 (PsbA/PsbD) reaction center heterodimer binds P680, the primary electron donor of PSII as well as several subsequent electron acceptors. The chain is Photosystem II protein D1 2 from Parasynechococcus marenigrum (strain WH8102).